We begin with the raw amino-acid sequence, 642 residues long: Zinc finger protein 398 (642 aa).

Disordered stretches follow at residues 1–24 (MAEAAPAPTSEWDSECLTSLQPLP) and 198–225 (EGEHNTEDQAGPEESEIPTDPSEEPGIS). Positions 143–214 (VAFDDVSIYF…DQAGPEESEI (72 aa)) constitute a KRAB domain. Acidic residues predominate over residues 207 to 220 (AGPEESEIPTDPSE). K265 is covalently cross-linked (Glycyl lysine isopeptide (Lys-Gly) (interchain with G-Cter in SUMO2)). The segment at 343 to 364 (FSCHHCGKNLSQDMLLTHQCSH) adopts a C2H2-type 1; atypical zinc-finger fold. A C2H2-type 2; degenerate zinc finger spans residues 370–392 (LPCAQCPKHFTPQADLSSTSQDH). 7 consecutive C2H2-type zinc fingers follow at residues 398–420 (PTCPHCARTFTHPSRLTYHLRVH), 427–449 (FPCPDCPKRFADQARLTSHRRAH), 455–477 (FRCAQCGRSFSLKISLLLHQRGH), 483–505 (FSCPQCGIDFNGHSALIRHQMIH), 511–533 (YPCTDCSKSFMRKEHLLNHRRLH), 539–561 (FSCPHCGKSFIRKHHLMKHQRIH), and 567–590 (YPCSYCGRSFRYKQTLKDHLRSGH). The disordered stretch occupies residues 587–615 (RSGHNGGCGGDSDPSGQPPNPPGPLITGL).

The protein belongs to the krueppel C2H2-type zinc-finger protein family.

The protein localises to the nucleus. Functionally, functions as a transcriptional activator. In Homo sapiens (Human), this protein is Zinc finger protein 398 (ZNF398).